The primary structure comprises 494 residues: Peptidyl-prolyl cis-trans isomerase-like 4 (494 aa).

Positions 1 to 172 constitute a PPIase cyclophilin-type domain; that stretch reads MSVLLETSAG…VDIRIKHTVI (172 aa). Positions 176–196 are disordered; sequence PYPDPAGMREPSASPPPSKAQ. A coiled-coil region spans residues 206–240; it reads EELLDVEASEEAAAEAERRRREREAAAQALTLEMM. Residues 253–331 form the RRM domain; the sequence is NVLFVCKLNP…RRIHVDFSQS (79 aa). Basic and acidic residues-rich tracts occupy residues 391-418 and 425-494; these read DLKGRHDGDKPPVRDSRPDVGGGRDRST and PRRD…YRRR. The disordered stretch occupies residues 391 to 494; the sequence is DLKGRHDGDK…NRGRDDYRRR (104 aa).

This sequence belongs to the cyclophilin-type PPIase family. PPIL4 subfamily.

It is found in the nucleus. The enzyme catalyses [protein]-peptidylproline (omega=180) = [protein]-peptidylproline (omega=0). Its function is as follows. PPIases accelerate the folding of proteins. It catalyzes the cis-trans isomerization of proline imidic peptide bonds in oligopeptides. In Neurospora crassa (strain ATCC 24698 / 74-OR23-1A / CBS 708.71 / DSM 1257 / FGSC 987), this protein is Peptidyl-prolyl cis-trans isomerase-like 4 (cyp-6).